Reading from the N-terminus, the 88-residue chain is Small ribosomal subunit protein bS16 (88 aa).

This sequence belongs to the bacterial ribosomal protein bS16 family.

In Halothermothrix orenii (strain H 168 / OCM 544 / DSM 9562), this protein is Small ribosomal subunit protein bS16.